Here is an 811-residue protein sequence, read N- to C-terminus: Transmembrane protease serine 6 (811 aa).

Residues 1–55 (MLLLFHSKRMPVAEAPQVAGGQGDGGDGEEAEPEGMFKACEDSKRKARGYLRLVP) are Cytoplasmic-facing. The chain crosses the membrane as a helical; Signal-anchor for type II membrane protein span at residues 56–76 (LFVLLALLVLASAGVLLWYFL). The Extracellular segment spans residues 77–811 (GYKAEVMVSQ…VISWIQQVVT (735 aa)). One can recognise an SEA domain in the interval 84–209 (VSQVYSGSLR…EGLVILEASV (126 aa)). Residues N136, N184, N216, N338, N433, and N453 are each glycosylated (N-linked (GlcNAc...) asparagine). 2 CUB domains span residues 213–336 (AALN…QACE) and 335–452 (CEVN…YGLY). A disulfide bridge connects residues C335 and C366. LDL-receptor class A domains follow at residues 457–489 (PCPG…ERNC), 490–526 (VCRA…EQCQ), and 530–567 (PCGT…EHCD). 10 cysteine pairs are disulfide-bonded: C458-C470, C464-C480, C474-C489, C491-C503, C497-C516, C510-C525, C531-C543, C538-C557, C551-C566, and C602-C618. The N-linked (GlcNAc...) asparagine glycan is linked to N518. The 235-residue stretch at 577 to 811 (IVGGAVSSEG…VISWIQQVVT (235 aa)) folds into the Peptidase S1 domain. Catalysis depends on charge relay system residues H617 and D668. 3 cysteine pairs are disulfide-bonded: C702–C768, C733–C747, and C758–C787. Residue S762 is the Charge relay system of the active site.

The protein belongs to the peptidase S1 family. In terms of assembly, interacts with HJV. In terms of processing, the single-chain zymogen undergoes autoproteolytic processing. This results in TMPRSS6 shedding from the cell surface and conversion into an activated two-chains form which is released extracellularly. The process involves a trans-activation mechanism that requires TMPRSS6 oligomerization.

The protein localises to the cell membrane. Functionally, membrane-bound serine protease. Through the cleavage of cell surface hemojuvelin (HJV), a regulator of the expression of the iron absorption-regulating hormone hepicidin/HAMP, plays a role in iron homeostasis. The protein is Transmembrane protease serine 6 (TMPRSS6) of Homo sapiens (Human).